Here is a 150-residue protein sequence, read N- to C-terminus: NmrA-like family domain-containing protein 1 (150 aa).

NADP(+)-binding positions include 7 to 12 (GATGAQ), 33 to 37 (RNPEQ), and Lys71.

This sequence belongs to the NmrA-type oxidoreductase family. In terms of assembly, homodimer. Interacts with ASS1. Interaction is enhanced by low NADPH/NADP(+) ratios, which results in inhibition of ASS1 activity.

The protein localises to the cytoplasm. It localises to the perinuclear region. The protein resides in the nucleus. Its function is as follows. Redox sensor protein. Undergoes restructuring and subcellular redistribution in response to changes in intracellular NADPH/NADP(+) levels. At low NADPH concentrations the protein is found mainly as a monomer, and binds argininosuccinate synthase (ASS1), the enzyme involved in nitric oxide synthesis. Association with ASS1 impairs its activity and reduces the production of nitric oxide, which subsecuently prevents apoptosis. Under normal NADPH concentrations, the protein is found as a dimer and hides the binding site for ASS1. The homodimer binds one molecule of NADPH. Has higher affinity for NADPH than for NADP(+). Binding to NADPH is necessary to form a stable dimer. This chain is NmrA-like family domain-containing protein 1, found in Rattus norvegicus (Rat).